Reading from the N-terminus, the 202-residue chain is 3-isopropylmalate dehydratase small subunit (202 aa).

This sequence belongs to the LeuD family. LeuD type 1 subfamily. Heterodimer of LeuC and LeuD.

It carries out the reaction (2R,3S)-3-isopropylmalate = (2S)-2-isopropylmalate. Its pathway is amino-acid biosynthesis; L-leucine biosynthesis; L-leucine from 3-methyl-2-oxobutanoate: step 2/4. Its function is as follows. Catalyzes the isomerization between 2-isopropylmalate and 3-isopropylmalate, via the formation of 2-isopropylmaleate. This Rhizobium etli (strain ATCC 51251 / DSM 11541 / JCM 21823 / NBRC 15573 / CFN 42) protein is 3-isopropylmalate dehydratase small subunit.